Consider the following 195-residue polypeptide: Imidazoleglycerol-phosphate dehydratase (195 aa).

This sequence belongs to the imidazoleglycerol-phosphate dehydratase family.

It localises to the cytoplasm. It carries out the reaction D-erythro-1-(imidazol-4-yl)glycerol 3-phosphate = 3-(imidazol-4-yl)-2-oxopropyl phosphate + H2O. Its pathway is amino-acid biosynthesis; L-histidine biosynthesis; L-histidine from 5-phospho-alpha-D-ribose 1-diphosphate: step 6/9. The sequence is that of Imidazoleglycerol-phosphate dehydratase from Thiobacillus denitrificans (strain ATCC 25259 / T1).